The sequence spans 262 residues: Putative ankyrin repeat protein FPV243 (262 aa).

Residues 25–54 (YGSTPLFEAICNCSCKNVKLFLENNADINE) form an ANK repeat.

This Vertebrata (FPV) protein is Putative ankyrin repeat protein FPV243.